We begin with the raw amino-acid sequence, 537 residues long: 2-succinyl-5-enolpyruvyl-6-hydroxy-3-cyclohexene-1-carboxylate synthase (537 aa).

Belongs to the TPP enzyme family. MenD subfamily. Homodimer. The cofactor is Mg(2+). Mn(2+) is required as a cofactor. Requires thiamine diphosphate as cofactor.

It catalyses the reaction isochorismate + 2-oxoglutarate + H(+) = 5-enolpyruvoyl-6-hydroxy-2-succinyl-cyclohex-3-ene-1-carboxylate + CO2. Its pathway is quinol/quinone metabolism; 1,4-dihydroxy-2-naphthoate biosynthesis; 1,4-dihydroxy-2-naphthoate from chorismate: step 2/7. The protein operates within quinol/quinone metabolism; menaquinone biosynthesis. Its function is as follows. Catalyzes the thiamine diphosphate-dependent decarboxylation of 2-oxoglutarate and the subsequent addition of the resulting succinic semialdehyde-thiamine pyrophosphate anion to isochorismate to yield 2-succinyl-5-enolpyruvyl-6-hydroxy-3-cyclohexene-1-carboxylate (SEPHCHC). This chain is 2-succinyl-5-enolpyruvyl-6-hydroxy-3-cyclohexene-1-carboxylate synthase, found in Rhodococcus erythropolis (strain PR4 / NBRC 100887).